A 476-amino-acid chain; its full sequence is Protein transport protein Sec61 subunit alpha (476 aa).

At 2–33 (GIKFLEVIKPFCAVLPEIQKPERKIQFREKVL) the chain is on the cytoplasmic side. A helical membrane pass occupies residues 34–53 (WTAITLFIFLVCCQIPLFGI). At 54 to 76 (MSSDSADPFYWMRVILASNRGTL) the chain is on the lumenal side. A helical transmembrane segment spans residues 77–96 (MELGISPIVTSGLIMQLLAG). Topologically, residues 97–117 (AKIIGVGDTPKDRALFNGAQK) are cytoplasmic. Residues 118 to 138 (LFGMIITIGQAIVYVMTGMYG) form a helical membrane-spanning segment. Over 139 to 144 (DPSEMG) the chain is Lumenal. The chain crosses the membrane as a helical span at residues 145–165 (AGICLLIIIQLFVAGLIVLLL). At 166–172 (DELLQKG) the chain is on the cytoplasmic side. Residues 173 to 193 (YGLGSGISLFIATNICETIVW) form a helical membrane-spanning segment. The Lumenal segment spans residues 194–240 (KAFSPTTVNTGRGTEFEGAIIALFHLLATRTDKVRALREGFYRQNLP). The helical transmembrane segment at 241–261 (NLMNLIATVFVFAVVIYFQGF) threads the bilayer. Over 262-288 (RVDLPIKSARYRGQYNTYPIKLFYTSN) the chain is Cytoplasmic. Residues 289-309 (IPIILQSALVSNLYVISQMLS) traverse the membrane as a helical segment. Over 310–354 (TRFSGNFLVNLLGTWSDATSGGPARAYPVAGLCYYLSPPESFGSV) the chain is Lumenal. Residues 355–375 (LDDPVHAGIYIVFMLGSCAFF) form a helical membrane-spanning segment. The Cytoplasmic portion of the chain corresponds to 376-420 (SKTWIEVSGSSAKDVAKQLKEQQMVMRGHRETSMVHELNRYIPTA). A helical membrane pass occupies residues 421 to 441 (AAFGGLCIGGLSVMADFLGAI). Residues 442-445 (GSGT) lie on the Lumenal side of the membrane. Residues 446-462 (GILLAVTIIYQYFEIFV) traverse the membrane as a helical segment. Over 463 to 476 (KEQSEVGSMGALLF) the chain is Cytoplasmic.

It belongs to the SecY/SEC61-alpha family. The SEC61 channel-forming translocon complex consists of channel-forming core components SEC61A1, SEC61B and SEC61G and different auxiliary components such as SEC62 and SEC63. The SEC61 channel associates with the multi-pass translocon (MPT) complex.

It is found in the endoplasmic reticulum membrane. Functionally, component of SEC61 channel-forming translocon complex that mediates transport of signal peptide-containing precursor polypeptides across the endoplasmic reticulum (ER). Forms a ribosome receptor and a gated pore in the ER membrane, both functions required for cotranslational translocation of nascent polypeptides. May cooperate with auxiliary protein SEC62, SEC63 and HSPA5/BiP to enable post-translational transport of small presecretory proteins. The SEC61 channel is also involved in ER membrane insertion of transmembrane proteins: it mediates membrane insertion of the first few transmembrane segments of proteins, while insertion of subsequent transmembrane regions of multi-pass membrane proteins is mediated by the multi-pass translocon (MPT) complex. The chain is Protein transport protein Sec61 subunit alpha (sec61a) from Hemitripterus americanus (Sea raven).